A 200-amino-acid chain; its full sequence is MIRLLSLVLFFCLSAASQASEKLLVLGDSLSAGYQMPIEKSWPSLLPDALLEHGQDVTVINGSISGDTTGNGLARLPQLLDQHTPDLVLIELGANDGLRGFPPKVITSNLSKMISLIKDSGANVVMMQIRVPPNYGKRYSDMFYDIYPKLAEHQQVQLMPFFLEHVITKPEWMMDDGLHPKPEAQPWIAEFVAQELVKHL.

An N-terminal signal peptide occupies residues methionine 1–alanine 19. The active-site Nucleophile is serine 29. Catalysis depends on residues aspartate 176 and histidine 179.

This sequence belongs to the 'GDSL' lipolytic enzyme family. Homodimer.

It carries out the reaction a phenyl acetate + H2O = a phenol + acetate + H(+). Its function is as follows. Favors the hydrolysis of several arylesters. The polypeptide is Arylesterase (Vibrio mimicus).